Consider the following 940-residue polypeptide: Vacuolar protein sorting-associated protein 54 (940 aa).

Thr-30 carries the post-translational modification Phosphothreonine. The segment at 192–218 (QQLERDKPLENGAQGAPGPGTGGQTPT) is disordered. The stretch at 299 to 325 (HAILAEMEQAADQVRQLRAALAELHSH) forms a coiled coil.

The protein belongs to the VPS54 family.

It localises to the golgi apparatus. The protein localises to the trans-Golgi network. Functionally, may be involved in retrograde transport from early and late endosomes to late Golgi. Required during spermatogenesis for sperm individualization. In Drosophila melanogaster (Fruit fly), this protein is Vacuolar protein sorting-associated protein 54 (scat).